Consider the following 155-residue polypeptide: Small ribosomal subunit protein uS7 (155 aa).

It belongs to the universal ribosomal protein uS7 family. As to quaternary structure, part of the 30S ribosomal subunit. Contacts proteins S9 and S11.

In terms of biological role, one of the primary rRNA binding proteins, it binds directly to 16S rRNA where it nucleates assembly of the head domain of the 30S subunit. Is located at the subunit interface close to the decoding center, probably blocks exit of the E-site tRNA. This is Small ribosomal subunit protein uS7 from Mycoplasma mycoides subsp. mycoides SC (strain CCUG 32753 / NCTC 10114 / PG1).